We begin with the raw amino-acid sequence, 407 residues long: 4-hydroxy-3-methylbut-2-en-1-yl diphosphate synthase (ferredoxin) (407 aa).

[4Fe-4S] cluster-binding residues include Cys-312, Cys-315, Cys-346, and Glu-353.

Belongs to the IspG family. [4Fe-4S] cluster is required as a cofactor.

The catalysed reaction is (2E)-4-hydroxy-3-methylbut-2-enyl diphosphate + 2 oxidized [2Fe-2S]-[ferredoxin] + H2O = 2-C-methyl-D-erythritol 2,4-cyclic diphosphate + 2 reduced [2Fe-2S]-[ferredoxin] + H(+). Its pathway is isoprenoid biosynthesis; isopentenyl diphosphate biosynthesis via DXP pathway; isopentenyl diphosphate from 1-deoxy-D-xylulose 5-phosphate: step 5/6. Converts 2C-methyl-D-erythritol 2,4-cyclodiphosphate (ME-2,4cPP) into 1-hydroxy-2-methyl-2-(E)-butenyl 4-diphosphate. The polypeptide is 4-hydroxy-3-methylbut-2-en-1-yl diphosphate synthase (ferredoxin) (Synechococcus elongatus (strain ATCC 33912 / PCC 7942 / FACHB-805) (Anacystis nidulans R2)).